Here is a 783-residue protein sequence, read N- to C-terminus: Na(+)/H(+) exchanger protein 7 (783 aa).

A helical membrane pass occupies residues Met1–Gly18. Residues Leu19–Leu108 lie on the Extracellular side of the membrane. Residues Val109–Val129 form a helical membrane-spanning segment. The Cytoplasmic portion of the chain corresponds to Thr130–Lys132. A helical transmembrane segment spans residues Ile133 to Gly153. The Extracellular portion of the chain corresponds to Asp154–Ser159. Residues Ile160–Leu180 form a helical membrane-spanning segment. At Glu181 to Thr206 the chain is on the cytoplasmic side. A helical transmembrane segment spans residues Ile207 to Gly227. The Extracellular segment spans residues Lys228–Asp235. The helical transmembrane segment at Ile236–Gln256 threads the bilayer. The Cytoplasmic segment spans residues Glu257 to Lys262. A helical membrane pass occupies residues Met263 to Tyr283. Residues Asn284–His299 lie on the Extracellular side of the membrane. The helical transmembrane segment at Gly300–Ile320 threads the bilayer. Residues Cys321–Ala350 lie on the Cytoplasmic side of the membrane. Residues Tyr351 to Phe371 form a helical membrane-spanning segment. Residues Gln372 to Tyr390 lie on the Extracellular side of the membrane. The N-linked (GlcNAc...) asparagine glycan is linked to Asn379. The helical intramembrane region spans Ile391–Leu411. The Extracellular segment spans residues Val412–Pro424. A helical transmembrane segment spans residues Val425 to Leu445. The Cytoplasmic segment spans residues Thr446–Gln464. A helical transmembrane segment spans residues Phe465–Ser485. At Ala486–Asn492 the chain is on the extracellular side. The helical transmembrane segment at Thr493–Ile513 threads the bilayer. At Lys514–Phe783 the chain is on the cytoplasmic side. Residues Asp649–Ala702 adopt a coiled-coil conformation. Positions Arg745–Phe783 are disordered.

The protein belongs to the monovalent cation:proton antiporter 1 (CPA1) transporter (TC 2.A.36) family. As to quaternary structure, interacts (via C-terminus) with cmd-1. Detected in the posterior cells of the intestine.

Its subcellular location is the basolateral cell membrane. Its function is as follows. Na+/H+ exchanger which mediates the transient acidification of the coelomic space and plays a role in contraction of posterior body muscles during defecation. Probably by regulating the defecation motor program, required for fatty acid uptake by intestinal cells. This chain is Na(+)/H(+) exchanger protein 7, found in Caenorhabditis elegans.